Reading from the N-terminus, the 2467-residue chain is Transcription factor TFIIIB component B'' homolog (2467 aa).

Disordered regions lie at residues 1-145 (MFRR…RYRI) and 159-243 (LRKE…VDDG). Positions 1–301 (MFRRARLSVK…TYSSFRKNYY (301 aa)) are interaction with ZBTB43. Residues 81–92 (AAESSTLSSASS) show a composition bias toward low complexity. Over residues 99–118 (SSTSSLVQPSGSAPSQSRPL) the composition is skewed to polar residues. Basic and acidic residues-rich tracts occupy residues 133–144 (AKEKQPCSDRYR) and 177–186 (RPPDRSKMTM). Positions 144–177 (RIYKARKLREMLKEELRKEKKQWKNKFSTNESQR) form a coiled coil. A compositionally biased stretch (acidic residues) spans 231–242 (NDNEDVEEEVDD). In terms of domain architecture, Myb-like spans 297–347 (RKNYYSKPWSNKETDMFFLAISMVGTDFSMIGQLFPHRARIEIKNKFKREE). The segment at 357–472 (AFQEKRPFDF…QEKKRRRNQG (116 aa)) is required for phosphorylation by CSNK2A1. Disordered regions lie at residues 380–513 (EEKR…ECNK), 576–720 (SADM…VKAA), 748–844 (PPQT…PATW), 866–893 (LTAT…NAEM), 971–1200 (LQEN…SSKI), 1231–1270 (LGRH…VKPA), 1318–1388 (DSDQ…LVPI), 1409–1448 (LPVR…PELQ), 1527–1561 (KAKP…EDHL), 1592–1706 (IHSE…RASK), 1902–1926 (IVSK…LPTR), 1977–2014 (IQRE…QCVG), 2058–2083 (LDSG…SDVP), 2179–2206 (LVVQ…DLTS), 2260–2290 (GIFP…SGSL), and 2304–2449 (LPQS…EEVT). A coiled-coil region spans residues 458–487 (EQDQNQEKKRRRNQGEANKQEATNLLERVL). The span at 649-660 (AAEKNHMEKETM) shows a compositional bias: basic and acidic residues. The segment covering 809–824 (RFQKPKPNTGRRRRRI) has biased composition (basic residues). 6 stretches are compositionally biased toward basic and acidic residues: residues 873-884 (KDSESDVKDSGR), 992-1002 (TGKDLAMKEST), 1009-1041 (TEER…RGEM), 1089-1098 (EGKELNLRET), 1112-1130 (EKTD…ERES), and 1150-1170 (DLGK…EEHS). Polar residues-rich tracts occupy residues 1180-1200 (LSSS…SSKI), 1251-1265 (DTNL…QQPL), 1318-1330 (DSDQ…QHNV), and 1364-1382 (PPNS…NQEN). 3 stretches are compositionally biased toward basic and acidic residues: residues 1429-1448 (QIVE…PELQ), 1536-1561 (RRKD…EDHL), and 1592-1603 (IHSEESGSDRND). 2 stretches are compositionally biased toward polar residues: residues 1621 to 1642 (EQPT…SSCP) and 1650 to 1665 (YPKT…SSAS). The segment covering 1688 to 1697 (RGSKRIRGKT) has biased composition (basic residues). Basic and acidic residues-rich tracts occupy residues 1902–1913 (IVSKEQSNRDAA), 1977–1996 (IQRE…DKSH), and 2068–2078 (AAKEALKETPK). Low complexity predominate over residues 2185-2199 (PSLSPSRSGSSEKPP). Composition is skewed to polar residues over residues 2262–2273 (FPTSESTHATSK), 2319–2334 (PASN…SSSK), and 2414–2429 (TAGS…SSDQ).

As to quaternary structure, component of TFIIIB complex. The TFIIIB complex has two activities, alpha and beta. The TFIIIB-alpha and TFIIIB-beta activities are required for transcription of genes with TFIIIC-bound internal promoters and PSE transcription factor-bound external promoters, respectively. The TFIIIB-alpha activity complex is composed of TBP, BDP1, and a complex containing both BRF2 and at least four stably associated proteins; YY1 facilitates the formation of TFIIIB-alpha activity complex. The TFIIIB-beta activity complex is composed of TBP, BDP1, and BRF1. Interacts with BRF1; this interaction diminishes during mitosis resulting in the release of BDP1 from chromosomal templates. Component of TFIIIC complex. The TFIIIC complex has two activities, C1 and C2. The TFIIIC2 activity complex is only required for transcription of the 'classical' pol III genes whereas the TFIIIC1 activity complex is required for transcription of all pol III genes. The TFIIIC1 activity complex is composed at least of BDP1. Interacts with ZBTB43. In terms of processing, phosphorylated by CSNK2A1 during mitosis, resulting in its release from chromatin and suppression of polymerase III transcription. Expressed in the cochlea, particularly in the spiral ligament, the capillaries of the stria vascularis and the basilar membrane.

It is found in the nucleus. In terms of biological role, general activator of RNA polymerase III transcription. Requires for transcription from all three types of polymerase III promoters. Requires for transcription of genes with internal promoter elements and with promoter elements upstream of the initiation site. This chain is Transcription factor TFIIIB component B'' homolog (Bdp1), found in Mus musculus (Mouse).